The chain runs to 586 residues: Protein translocase subunit SecD (586 aa).

The next 6 membrane-spanning stretches (helical) occupy residues 7-27 (LILI…TLKW), 418-438 (SALA…LSGV), 439-459 (VAGF…LSAF), 465-485 (LTSI…NIVI), 521-541 (TFIA…GFAW), and 546-566 (GIVA…EFII).

The protein belongs to the SecD/SecF family. SecD subfamily. In terms of assembly, forms a complex with SecF. Part of the essential Sec protein translocation apparatus which comprises SecA, SecYEG and auxiliary proteins SecDF. Other proteins may also be involved.

It localises to the cell inner membrane. Its function is as follows. Part of the Sec protein translocase complex. Interacts with the SecYEG preprotein conducting channel. SecDF uses the proton motive force (PMF) to complete protein translocation after the ATP-dependent function of SecA. This chain is Protein translocase subunit SecD, found in Borreliella burgdorferi (strain ATCC 35210 / DSM 4680 / CIP 102532 / B31) (Borrelia burgdorferi).